A 293-amino-acid chain; its full sequence is Nucleotide-binding protein HRM2_27900 (293 aa).

ATP is bound at residue 11–18 (GLSGSGKS). Residue 62 to 65 (DIRA) coordinates GTP.

Belongs to the RapZ-like family.

In terms of biological role, displays ATPase and GTPase activities. In Desulforapulum autotrophicum (strain ATCC 43914 / DSM 3382 / VKM B-1955 / HRM2) (Desulfobacterium autotrophicum), this protein is Nucleotide-binding protein HRM2_27900.